The following is a 169-amino-acid chain: Peptide methionine sulfoxide reductase MsrA (169 aa).

Residue cysteine 10 is part of the active site.

It belongs to the MsrA Met sulfoxide reductase family.

It catalyses the reaction L-methionyl-[protein] + [thioredoxin]-disulfide + H2O = L-methionyl-(S)-S-oxide-[protein] + [thioredoxin]-dithiol. The enzyme catalyses [thioredoxin]-disulfide + L-methionine + H2O = L-methionine (S)-S-oxide + [thioredoxin]-dithiol. In terms of biological role, has an important function as a repair enzyme for proteins that have been inactivated by oxidation. Catalyzes the reversible oxidation-reduction of methionine sulfoxide in proteins to methionine. This Streptococcus pyogenes serotype M3 (strain ATCC BAA-595 / MGAS315) protein is Peptide methionine sulfoxide reductase MsrA.